The following is a 276-amino-acid chain: tRNA (guanine-N(7)-)-methyltransferase (276 aa).

Residues 1–23 are disordered; that stretch reads MRPDPAPLDPTDASPAQARRHQP. S-adenosyl-L-methionine is bound by residues Glu-103, Glu-128, Asp-155, and Asp-178. Asp-178 is an active-site residue. Substrate contacts are provided by residues Lys-182, Asp-214, and 252 to 255; that span reads TRYE.

The protein belongs to the class I-like SAM-binding methyltransferase superfamily. TrmB family.

It carries out the reaction guanosine(46) in tRNA + S-adenosyl-L-methionine = N(7)-methylguanosine(46) in tRNA + S-adenosyl-L-homocysteine. It functions in the pathway tRNA modification; N(7)-methylguanine-tRNA biosynthesis. Catalyzes the formation of N(7)-methylguanine at position 46 (m7G46) in tRNA. The polypeptide is tRNA (guanine-N(7)-)-methyltransferase (Cutibacterium acnes (strain DSM 16379 / KPA171202) (Propionibacterium acnes)).